A 43-amino-acid chain; its full sequence is uncharacterized protein (43 aa).

This is an uncharacterized protein from Escherichia coli (Bacteriophage T4).